We begin with the raw amino-acid sequence, 238 residues long: MKISILTLFPEMFSIFNHSIIGRAQENNIVELELLNIRDNTLDKHKKVDDYPYGGGAGMVMAPQPIIDTIRKAKENNKGKVIFLGPRGKTFNQKMAMDLSKEENLIFLCGHYEGIDERVYKHIDMEVSLGDFILTGGEMAAIPVIDSILRLIPGVLGKEESFVDESFSEDLLEYPQYTRPYEFEGEHVPEILLSGHHENIRKWRRLQSLDLTRKRRPDLYKNVILTKEDKKLLGRKNK.

Residues Gly-110 and 129–134 (LGDFIL) each bind S-adenosyl-L-methionine.

Belongs to the RNA methyltransferase TrmD family. Homodimer.

The protein localises to the cytoplasm. The catalysed reaction is guanosine(37) in tRNA + S-adenosyl-L-methionine = N(1)-methylguanosine(37) in tRNA + S-adenosyl-L-homocysteine + H(+). In terms of biological role, specifically methylates guanosine-37 in various tRNAs. The sequence is that of tRNA (guanine-N(1)-)-methyltransferase from Clostridium botulinum (strain Eklund 17B / Type B).